Reading from the N-terminus, the 303-residue chain is N-acetyl-D-glucosamine kinase (303 aa).

ATP-binding positions include 4–11 (GFDIGGTK) and 133–140 (GVGGGLIF). Residues H157, C177, C179, and C184 each coordinate Zn(2+).

Belongs to the ROK (NagC/XylR) family. NagK subfamily.

It catalyses the reaction N-acetyl-D-glucosamine + ATP = N-acetyl-D-glucosamine 6-phosphate + ADP + H(+). Its pathway is cell wall biogenesis; peptidoglycan recycling. Functionally, catalyzes the phosphorylation of N-acetyl-D-glucosamine (GlcNAc) derived from cell-wall degradation, yielding GlcNAc-6-P. In Escherichia coli O9:H4 (strain HS), this protein is N-acetyl-D-glucosamine kinase.